We begin with the raw amino-acid sequence, 713 residues long: MFPHEEKLIRERLGREPNEVEKAMLEVMWSEHASYKSSRPFLKLLPTENEHVVLGPGEDAGIVKFDDETWIAVGIESHNHPSAVEPYGGAATGVGGIVRDILCMGARPIALLDPIRFGPLEKERNRYLLQGVVKGIADYGNRIGVPTVGGETEFDESLDNYTLVNVACVGIMRPEHFVHSYVEEAGLKLVLVGNRTGRDGIHGVTFASEELSENAEEEDRSAVQIPDPFTEKLLIEATLEAVYTGKVRALKDLGGGGLTCASSEMAGKKGFGAVIYADRVPLREPNMTPTEVMISESQERMLFAVREEDVEEIGKIFEKYGLEWTVVGEIIKEPRYIVYWKGEKVADLPIDLLTEVPTIEWETRPYSLERDVETPKISFSDAFELVWSSPNVLNKRWVWEQYDHEVQGRTVVKPGRDAAVLKINERYGLAFVADGNPNHSHLNPYHGAMGAVAEVVRNLVSVGAEPLALVDNLNFASPERPEVYWSFAETVRGLADAARAFGLAYVSGNVSFYNEVVDRPIKPTPVVAGLGKVELEKIPGFGLEEGLLIGVVGSTKRELGGSELYVRLGLKGGIAPRVNLEEEKANAEGILEAIRRGLLKAVHDVSKGGIAVALAEMAVLGNTGFTADLSKVPAETSNPLEVAFSESHGRYIVVFPEERLEELKALFRHFAVIGRAGGSGAVFLWNGDELLRKPITKLREVHESFPKLLGEEE.

Histidine 32 is an active-site residue. Residue tyrosine 35 coordinates ATP. Residue glutamate 76 coordinates Mg(2+). Substrate-binding positions include 77–80 and arginine 99; that span reads SHNH. The Proton acceptor role is filled by histidine 78. Position 100 (aspartate 100) interacts with Mg(2+). Glutamine 224 contacts substrate. Residue aspartate 252 coordinates Mg(2+). Residue 296-298 coordinates substrate; the sequence is ESQ. ATP contacts are provided by aspartate 471 and glycine 508. Asparagine 509 contributes to the Mg(2+) binding site. Serine 511 is a substrate binding site.

It belongs to the FGAMS family. As to quaternary structure, monomer. Part of the FGAM synthase complex composed of 1 PurL, 1 PurQ and 2 PurS subunits.

The protein resides in the cytoplasm. It catalyses the reaction N(2)-formyl-N(1)-(5-phospho-beta-D-ribosyl)glycinamide + L-glutamine + ATP + H2O = 2-formamido-N(1)-(5-O-phospho-beta-D-ribosyl)acetamidine + L-glutamate + ADP + phosphate + H(+). Its pathway is purine metabolism; IMP biosynthesis via de novo pathway; 5-amino-1-(5-phospho-D-ribosyl)imidazole from N(2)-formyl-N(1)-(5-phospho-D-ribosyl)glycinamide: step 1/2. Its function is as follows. Part of the phosphoribosylformylglycinamidine synthase complex involved in the purines biosynthetic pathway. Catalyzes the ATP-dependent conversion of formylglycinamide ribonucleotide (FGAR) and glutamine to yield formylglycinamidine ribonucleotide (FGAM) and glutamate. The FGAM synthase complex is composed of three subunits. PurQ produces an ammonia molecule by converting glutamine to glutamate. PurL transfers the ammonia molecule to FGAR to form FGAM in an ATP-dependent manner. PurS interacts with PurQ and PurL and is thought to assist in the transfer of the ammonia molecule from PurQ to PurL. In Thermococcus kodakarensis (strain ATCC BAA-918 / JCM 12380 / KOD1) (Pyrococcus kodakaraensis (strain KOD1)), this protein is Phosphoribosylformylglycinamidine synthase subunit PurL.